A 2345-amino-acid chain; its full sequence is Acetyl-CoA carboxylase 1 (2345 aa).

Methionine 1 carries the post-translational modification N-acetylmethionine. 8 positions are modified to phosphoserine: serine 5, serine 23, serine 25, serine 29, serine 34, serine 47, serine 49, and serine 52. Threonine 57 is modified (phosphothreonine). Residue serine 77 is modified to Phosphoserine. Serine 79 is subject to Phosphoserine; by AMPK. The Biotin carboxylation domain occupies 116 to 617 (VIEKVLIANN…DTGWLDRLIA (502 aa)). An ATP-grasp domain is found at 274–465 (SKRILNVPQD…LPAAQLQIAM (192 aa)). Residue 314 to 319 (GGGGKG) coordinates ATP. Mg(2+) contacts are provided by glutamate 423, glutamate 436, and asparagine 438. The Mn(2+) site is built by glutamate 423, glutamate 436, and asparagine 438. Residue arginine 440 is part of the active site. A Phosphothreonine modification is found at threonine 609. In terms of domain architecture, Biotinyl-binding spans 744-818 (FEKENDPSVM…DPGCVIAKMQ (75 aa)). Lysine 785 bears the N6-biotinyllysine mark. Serine 834 is subject to Phosphoserine. Phosphoserine; by AMPK; in vitro occurs at positions 1200 and 1215. A Phosphoserine modification is found at serine 1217. At threonine 1226 the chain carries Phosphothreonine. Residues serine 1258, serine 1262, and serine 1272 each carry the phosphoserine modification. The residue at position 1333 (lysine 1333) is an N6-acetyllysine. One can recognise a CoA carboxyltransferase N-terminal domain in the interval 1575–1913 (PYVTKDLLQS…NVHSSVPLLN (339 aa)). The segment at 1575–2233 (PYVTKDLLQS…EDLVKKKIHS (659 aa)) is carboxyltransferase. Positions 1822, 2126, and 2128 each coordinate CoA. Positions 1917 to 2233 (PIDRIIEFVP…EDLVKKKIHS (317 aa)) constitute a CoA carboxyltransferase C-terminal domain. Position 2152 is a phosphothreonine (threonine 2152).

In terms of assembly, monomer, homodimer, and homotetramer. Can form filamentous polymers. Interacts in its inactive phosphorylated form with the BRCT domains of BRCA1 which prevents ACACA dephosphorylation and inhibits lipid synthesis. Interacts with MID1IP1; interaction with MID1IP1 promotes oligomerization and increases its activity. Mg(2+) is required as a cofactor. Mn(2+) serves as cofactor. The cofactor is biotin. Post-translationally, the N-terminus is blocked. Phosphorylation on Ser-1262 is required for interaction with BRCA1. In terms of processing, phosphorylation at Ser-79 by AMPK inactivates enzyme activity. Phosphorylated in vitro at Ser-1200 and Ser-1215 by AMPK; the relevance of phosphorylation of these sites in vivo is however unclear. Post-translationally, the biotin cofactor is covalently attached to the central biotinyl-binding domain and is required for the catalytic activity.

Its subcellular location is the cytoplasm. It localises to the cytosol. It carries out the reaction hydrogencarbonate + acetyl-CoA + ATP = malonyl-CoA + ADP + phosphate + H(+). Its pathway is lipid metabolism; malonyl-CoA biosynthesis; malonyl-CoA from acetyl-CoA: step 1/1. With respect to regulation, inhibited by phosphorylation. Citrate promotes oligomerization of the protein into filaments that correspond to the most active form of the carboxylase. Its function is as follows. Cytosolic enzyme that catalyzes the carboxylation of acetyl-CoA to malonyl-CoA, the first and rate-limiting step of de novo fatty acid biosynthesis. This is a 2 steps reaction starting with the ATP-dependent carboxylation of the biotin carried by the biotin carboxyl carrier (BCC) domain followed by the transfer of the carboxyl group from carboxylated biotin to acetyl-CoA. This chain is Acetyl-CoA carboxylase 1, found in Rattus norvegicus (Rat).